A 333-amino-acid chain; its full sequence is Protein-methionine-sulfoxide reductase catalytic subunit MsrP (333 aa).

Positions 1–43 form a signal peptide, tat-type signal; it reads MHKHRKPTEADVTPESLFYQRRRILKALGISAAALSLPFSAQA. Mo-molybdopterin is bound by residues Asn-87, 90-91, Cys-145, Thr-180, Asn-232, Arg-237, and 248-250; these read YE and NIK.

This sequence belongs to the MsrP family. In terms of assembly, heterodimer of a catalytic subunit (MsrP) and a heme-binding subunit (MsrQ). The cofactor is Mo-molybdopterin. Post-translationally, predicted to be exported by the Tat system. The position of the signal peptide cleavage has not been experimentally proven.

The protein localises to the periplasm. It catalyses the reaction L-methionyl-[protein] + a quinone + H2O = L-methionyl-(S)-S-oxide-[protein] + a quinol. It carries out the reaction L-methionyl-[protein] + a quinone + H2O = L-methionyl-(R)-S-oxide-[protein] + a quinol. Functionally, part of the MsrPQ system that repairs oxidized periplasmic proteins containing methionine sulfoxide residues (Met-O), using respiratory chain electrons. Thus protects these proteins from oxidative-stress damage caused by reactive species of oxygen and chlorine generated by the host defense mechanisms. MsrPQ is essential for the maintenance of envelope integrity under bleach stress, rescuing a wide series of structurally unrelated periplasmic proteins from methionine oxidation. The catalytic subunit MsrP is non-stereospecific, being able to reduce both (R-) and (S-) diastereoisomers of methionine sulfoxide. This is Protein-methionine-sulfoxide reductase catalytic subunit MsrP from Pectobacterium carotovorum subsp. carotovorum (strain PC1).